Reading from the N-terminus, the 225-residue chain is DNA repair and recombination protein RadB (225 aa).

The protein belongs to the eukaryotic RecA-like protein family. RadB subfamily.

Functionally, involved in DNA repair and in homologous recombination. May regulate the cleavage reactions of the branch-structured DNA. Has a very weak ATPase activity that is not stimulated by DNA. Binds DNA but does not promote DNA strands exchange. The sequence is that of DNA repair and recombination protein RadB from Methanococcoides burtonii (strain DSM 6242 / NBRC 107633 / OCM 468 / ACE-M).